Consider the following 407-residue polypeptide: MQLLNLSLFFLLPFATANPIPQDSQNIIPGQYIVTLKDGLTTAEIDAHKTWLAFTHRSNIAAKGHSGIESEGVFKHFQIHKLNMYAAGLDKKTVEELRRSPHVKSVLPDQKIYLAEAVTQSNAGWNLGYMSSKGQPSPSWSTLTNYTYDSTAGEGVWAYVLDTGVNVNHVEFEGRAILGRNSIPNRPHEDTFGHGTYVGGIIAGKTYGVAKKATVVSAKAFDGGSSSYRYILDSYEWIVKNITDSDRKSKSVINLSISGAKYQPFDEAIENAFQAGITTVVASGNDGRDASQNTPASSPNAITVGALRWENTRPGFSNYGKVVDLFAPGELIRSGWTGGNNATRVASGTSAASPHVAGLVAYLMSIETLSSPSEVTARVLNLTIPGLVKDARGSPNKVAYNGIQEML.

An N-terminal signal peptide occupies residues 1-17 (MQLLNLSLFFLLPFATA). Residues 18–115 (NPIPQDSQNI…VLPDQKIYLA (98 aa)) constitute a propeptide that is removed on maturation. One can recognise an Inhibitor I9 domain in the interval 31-114 (QYIVTLKDGL…SVLPDQKIYL (84 aa)). The region spanning 124–407 (GWNLGYMSSK…VAYNGIQEML (284 aa)) is the Peptidase S8 domain. Asparagine 145 carries an N-linked (GlcNAc...) asparagine glycan. Residues aspartate 162 and histidine 194 each act as charge relay system in the active site. N-linked (GlcNAc...) asparagine glycans are attached at residues asparagine 241, asparagine 254, and asparagine 341. The active-site Charge relay system is the serine 350. N-linked (GlcNAc...) asparagine glycosylation occurs at asparagine 381.

The protein belongs to the peptidase S8 family.

Its subcellular location is the secreted. Secreted subtilisin-like serine protease with keratinolytic activity that contributes to pathogenicity. In Coccidioides posadasii (strain C735) (Valley fever fungus), this protein is Subtilisin-like protease CPC735_013710.